Reading from the N-terminus, the 621-residue chain is Kelch-like protein 40 (621 aa).

Positions 33–98 constitute a BTB domain; that stretch reads LDCVVRVGER…LYTSEIALDE (66 aa). The region spanning 133-239 is the BACK domain; that stretch reads CLAVFRLGLL…PRAFLETRVE (107 aa). The interval 265 to 298 is disordered; it reads LTTLRKKKKEKGEQTARAKEANQGTEDTKAEDDE. The span at 274-284 shows a compositional bias: basic and acidic residues; that stretch reads EKGEQTARAKE. Kelch repeat units follow at residues 360–412, 413–462, 463–510, 512–557, and 559–613; these read QVFV…EALN, AIYV…SHMD, LVYV…VHDG, IFVA…SLAG, and LYAL…PVRL.

It belongs to the KLHL40 family. Component of the BCR(KLHL40) E3 ubiquitin ligase complex, at least composed of CUL3, KLHL40 and RBX1. Interacts with LMOD3. Specifically expressed in skeletal muscles in embryonic, neonatal and adults. Expressed in various types of muscles, including extensor digitorum longus, gastrocnemius, soleus, diaphragm, masseter and heart (at protein level). Not detected in brain, liver and lung (at protein level).

It localises to the cytoplasm. It is found in the myofibril. The protein resides in the sarcomere. The protein localises to the a band. Its subcellular location is the i band. Functionally, substrate-specific adapter of a BCR (BTB-CUL3-RBX1) E3 ubiquitin ligase complex that acts as a key regulator of skeletal muscle development. The BCR(KLHL40) complex acts by mediating ubiquitination and degradation of TFDP1, thereby regulating the activity of the E2F:DP transcription factor complex. Promotes stabilization of LMOD3 by acting as a negative regulator of LMOD3 ubiquitination; the molecular process by which it negatively regulates ubiquitination of LMOD3 is however unclear. The protein is Kelch-like protein 40 of Mus musculus (Mouse).